Reading from the N-terminus, the 342-residue chain is Cathepsin B-like cysteine proteinase 1 (342 aa).

Residues 1–18 (MKYLVLALCTYLCSQTGA) form the signal peptide. A propeptide spans 19-86 (DENAAQGIPL…VKEDPDPEVD (68 aa)) (activation peptide). The N-linked (GlcNAc...) asparagine glycan is linked to Asn-99. 6 cysteine pairs are disulfide-bonded: Cys-100/Cys-128, Cys-111/Cys-156, Cys-147/Cys-214, Cys-148/Cys-152, Cys-185/Cys-218, and Cys-193/Cys-205. Cys-114 is an active-site residue. The N-linked (GlcNAc...) asparagine glycan is linked to Asn-138. Asn-198 carries N-linked (GlcNAc...) asparagine glycosylation. His-285 is an active-site residue. An N-linked (GlcNAc...) asparagine glycan is attached at Asn-296. Asn-305 is an active-site residue.

Belongs to the peptidase C1 family.

Functionally, expression of the protease correlates with blood-feeding and suggests a role for the protease in blood digestion. The chain is Cathepsin B-like cysteine proteinase 1 (AC-1) from Haemonchus contortus (Barber pole worm).